Consider the following 452-residue polypeptide: UDP-N-acetylmuramoyl-tripeptide--D-alanyl-D-alanine ligase (452 aa).

107–113 (GSSGKTS) is a binding site for ATP.

The protein belongs to the MurCDEF family. MurF subfamily. As to quaternary structure, monomer.

Its subcellular location is the cytoplasm. It catalyses the reaction D-alanyl-D-alanine + UDP-N-acetyl-alpha-D-muramoyl-L-alanyl-gamma-D-glutamyl-meso-2,6-diaminopimelate + ATP = UDP-N-acetyl-alpha-D-muramoyl-L-alanyl-gamma-D-glutamyl-meso-2,6-diaminopimeloyl-D-alanyl-D-alanine + ADP + phosphate + H(+). Its pathway is cell wall biogenesis; peptidoglycan biosynthesis. Functionally, involved in cell wall formation. Catalyzes the final step in the synthesis of UDP-N-acetylmuramoyl-pentapeptide, the precursor of murein. This is UDP-N-acetylmuramoyl-tripeptide--D-alanyl-D-alanine ligase from Escherichia coli (strain K12).